We begin with the raw amino-acid sequence, 69 residues long: uncharacterized protein (69 aa).

This is an uncharacterized protein from Saccharolobus islandicus (Sulfolobus islandicus).